The primary structure comprises 500 residues: Glutamate--tRNA ligase (500 aa).

The short motif at 12 to 22 (PSPTGHLHIGN) is the 'HIGH' region element. The 'KMSKS' region motif lies at 259-263 (KLSKR). K262 lines the ATP pocket.

Belongs to the class-I aminoacyl-tRNA synthetase family. Glutamate--tRNA ligase type 1 subfamily. Monomer.

It is found in the cytoplasm. It carries out the reaction tRNA(Glu) + L-glutamate + ATP = L-glutamyl-tRNA(Glu) + AMP + diphosphate. In terms of biological role, catalyzes the attachment of glutamate to tRNA(Glu) in a two-step reaction: glutamate is first activated by ATP to form Glu-AMP and then transferred to the acceptor end of tRNA(Glu). This Lactobacillus delbrueckii subsp. bulgaricus protein is Glutamate--tRNA ligase.